The chain runs to 151 residues: MKLLKVAAFAAIVVSGSALAGVVPQWGGGGNHNGGGNSSGPDSTLSIYQYGSANAALALQSDARKSETTITQSGYGNGADVGQGADNSTIELTQNGFRNNATIDQWNAKNSDITVGQYGGNNAALVNQTASDSSVMVRQVGFGNNATANQY.

Positions 1–20 (MKLLKVAAFAAIVVSGSALA) are cleaved as a signal peptide.

This sequence belongs to the CsgA/CsgB family.

Its subcellular location is the fimbrium. Functionally, curlin is the structural subunit of the curli. Curli are coiled surface structures that assemble preferentially at growth temperatures below 37 degrees Celsius. Curli can bind to fibronectin. The polypeptide is Major curlin subunit (csgA) (Salmonella enteritidis).